A 984-amino-acid polypeptide reads, in one-letter code: Mineralocorticoid receptor (984 aa).

The segment at 1–602 (METKGYHSLP…STGSSRPSKI (602 aa)) is modulating. Residues 231–243 (QGTPLTCSPNVEN) are compositionally biased toward polar residues. Disordered stretches follow at residues 231–329 (QGTP…AAST) and 346–369 (SGTSAGSSTSRDVVPSPDTQEKGA). Residues S250, S259, S283, S287, and S299 each carry the phosphoserine modification. Positions 259–291 (SPLSSPLSSMKSSISSPPSHCSVKSPVSSPNNV) are enriched in low complexity. Positions 292 to 329 (TLRSSVSSPANINNSRCSVSSPSNTNNRSTLSSPAAST) are enriched in polar residues. Residues 346–355 (SGTSAGSSTS) are compositionally biased toward low complexity. Zn(2+)-binding residues include C603, C606, C620, C623, C639, C645, C655, and C658. 2 NR C4-type zinc fingers span residues 603 to 623 (CLVCGDEASGCHYGVVTCGSC) and 639 to 663 (CAGRNDCIIDKIRRKNCPACRLQKC). The segment at residues 603 to 668 (CLVCGDEASG…RLQKCLQAGM (66 aa)) is a DNA-binding region (nuclear receptor). Positions 669-725 (NLGARKSKKLGKLKGIHEEQPQQQQPPPPPPPPQSPEEGTTYIAPAKEPSVNTALVP) are hinge. Residues 684–710 (IHEEQPQQQQPPPPPPPPQSPEEGTTY) form a disordered region. A compositionally biased stretch (pro residues) spans 692-703 (QQPPPPPPPPQS). Residues 726-964 (QLSTISRALT…EFPAMLVEII (239 aa)) enclose the NR LBD domain. N770 and Q776 together coordinate 21-hydroxyprogesterone. Aldosterone is bound by residues N770 and Q776. Progesterone contacts are provided by N770 and Q776. The important for coactivator binding stretch occupies residues 782–785 (KWAK). 21-hydroxyprogesterone is bound by residues R817 and T945. Positions 817 and 945 each coordinate aldosterone. Progesterone-binding residues include R817 and T945.

Belongs to the nuclear hormone receptor family. NR3 subfamily. As to quaternary structure, heteromultimeric cytoplasmic complex with HSP90, HSP70, and FKBP4, in the absence of ligand. After ligand binding, it translocates to the nucleus and binds to DNA as a homodimer and as a heterodimer with NR3C1. Binds the coactivator NCOA2. May interact with HSD11B2 in the absence of ligand. Binds the coactivators NCOA1, TIF1 and NRIP1. Phosphorylated.

It is found in the cytoplasm. Its subcellular location is the nucleus. The protein localises to the endoplasmic reticulum membrane. Its function is as follows. Receptor for both mineralocorticoids (MC) such as aldosterone and glucocorticoids (GC) such as corticosterone or cortisol. Binds to mineralocorticoid response elements (MRE) and transactivates target genes. The effect of MC is to increase ion and water transport and thus raise extracellular fluid volume and blood pressure and lower potassium levels. This Aotus nancymaae (Ma's night monkey) protein is Mineralocorticoid receptor (NR3C2).